A 244-amino-acid chain; its full sequence is Dehydration-responsive element-binding protein 2E (244 aa).

The segment at methionine 1–valine 25 is disordered. The short motif at arginine 20–arginine 46 is the Nuclear localization signal element. A DNA-binding region (AP2/ERF) is located at residues arginine 69–proline 134.

It belongs to the AP2/ERF transcription factor family. ERF subfamily. Expressed in xylem tissues, stigma, anthers and region where sepals and petals attach the peduncle.

Its subcellular location is the nucleus. In terms of biological role, transcriptional activator that binds specifically to the DNA sequence 5'-[AG]CCGAC-3'. Binding to the C-repeat/DRE element mediates abscisic acid-inducible transcription. Involved in the regulation of plant development and tolerance to abiotic stresses. In Arabidopsis thaliana (Mouse-ear cress), this protein is Dehydration-responsive element-binding protein 2E (DREB2E).